The following is a 692-amino-acid chain: Chaperone protein dnaK1 (692 aa).

Threonine 197 bears the Phosphothreonine; by autocatalysis mark.

Belongs to the heat shock protein 70 family.

Its function is as follows. Acts as a chaperone. This is Chaperone protein dnaK1 (dnaK1) from Synechocystis sp. (strain ATCC 27184 / PCC 6803 / Kazusa).